The chain runs to 60 residues: Large ribosomal subunit protein uL30 (60 aa).

Belongs to the universal ribosomal protein uL30 family. In terms of assembly, part of the 50S ribosomal subunit.

The sequence is that of Large ribosomal subunit protein uL30 from Desulfitobacterium hafniense (strain DSM 10664 / DCB-2).